The primary structure comprises 531 residues: Protein tweety homolog 2-like (531 aa).

At 1 to 44 the chain is on the extracellular side; sequence MASSRQDYIAPWWTYWLHNFPHLNFNFQTVDNTFKPEDASYQQS. Residues 45–65 form a helical membrane-spanning segment; the sequence is LVFLACVSAVALGLCLLLLSV. Topologically, residues 66–87 are cytoplasmic; that stretch reads YLTCLCCCRREEDEEVKRPDTC. The chain crosses the membrane as a helical span at residues 88–108; that stretch reads CVTWAAVITGLVICSAVGVGF. Residues 109–213 are Extracellular-facing; the sequence is YGNSETNDGV…RTAFIEYYRW (105 aa). N129 carries N-linked (GlcNAc...) asparagine glycosylation. Residues 214-234 traverse the membrane as a helical segment; the sequence is LTYLLLLILDLVICLLACLAL. Residues 235-239 lie on the Cytoplasmic side of the membrane; that stretch reads AKQSR. A helical membrane pass occupies residues 240 to 260; sequence WLLTVIMVCGMLTLIMSWASL. Topologically, residues 261-389 are extracellular; it reads GAGTATAVGT…GVCYDGVEGL (129 aa). N283 and N352 each carry an N-linked (GlcNAc...) asparagine glycan. A helical membrane pass occupies residues 390–410; that stretch reads LYLCLFSLLAACAFCALLCAV. The Cytoplasmic segment spans residues 411 to 531; sequence PRAWMLIAIR…IRHFGTDFQV (121 aa).

This sequence belongs to the tweety family.

The protein resides in the cell membrane. Probable large-conductance Ca(2+)-activated chloride channel. The sequence is that of Protein tweety homolog 2-like (ttyh2l) from Danio rerio (Zebrafish).